The sequence spans 76 residues: U7-lycotoxin-Ls1b (76 aa).

A signal peptide spans 1 to 22 (MKLISFTGLALLLIVSLIDVEA). Positions 23-26 (QNEG) are excised as a propeptide.

This sequence belongs to the neurotoxin 19 (CSTX) family. 07 (U7-Lctx) subfamily. Contains 4 disulfide bonds. As to expression, expressed by the venom gland.

It localises to the secreted. The polypeptide is U7-lycotoxin-Ls1b (Lycosa singoriensis (Wolf spider)).